We begin with the raw amino-acid sequence, 244 residues long: Heat stress transcription factor B-3 (244 aa).

The DNA-binding element occupies 38-132; the sequence is PPPFLVKTYK…LMSNIRRRKS (95 aa). The segment at 173-218 is hydrophobic repeat HR-A/B; that stretch reads TSSSFVYTALLDENKCLKNENELLSCELGKTKKKCKQLMELVERYR. Residues 202–208 carry the Nuclear localization signal motif; the sequence is KTKKKCK. The tract at residues 216-244 is disordered; it reads RYRGEDEDATDESDDEEDEGLKLFGVKLE. The span at 220-234 shows a compositional bias: acidic residues; the sequence is EDEDATDESDDEEDE. The Nuclear export signal signature appears at 236–243; that stretch reads LKLFGVKL.

It belongs to the HSF family. Class B subfamily. As to quaternary structure, homotrimer. Exhibits temperature-dependent phosphorylation.

Its subcellular location is the cytoplasm. It is found in the nucleus. Transcriptional regulator that specifically binds DNA sequence 5'-AGAAnnTTCT-3' known as heat shock promoter elements (HSE). The chain is Heat stress transcription factor B-3 (HSFB3) from Arabidopsis thaliana (Mouse-ear cress).